A 68-amino-acid chain; its full sequence is Beta-defensin 1 (68 aa).

The first 21 residues, 1-21, serve as a signal peptide directing secretion; that stretch reads MRTSYLLLFTLCLLLSEMASG. Residues 22–32 constitute a propeptide that is removed on maturation; that stretch reads GNFLTGLGHRS. 3 cysteine pairs are disulfide-bonded: Cys-37–Cys-66, Cys-44–Cys-59, and Cys-49–Cys-67.

It belongs to the beta-defensin family. Monomer. Homodimer.

The protein resides in the secreted. It localises to the membrane. Functionally, has bactericidal activity. May act as a ligand for C-C chemokine receptor CCR6. Positively regulates the sperm motility and bactericidal activity in a CCR6-dependent manner. Binds to CCR6 and triggers Ca2+ mobilization in the sperm which is important for its motility. This is Beta-defensin 1 (DEFB1) from Pan troglodytes (Chimpanzee).